The sequence spans 269 residues: Meiotic drive suppressor wtf5 (269 aa).

A disordered region spans residues 1–65 (MKNNYTSLKS…NTHRENHSYG (65 aa)). Residues 19-30 (KTDHEIDLEKGP) are compositionally biased toward basic and acidic residues. The next 3 helical transmembrane spans lie at 73-95 (LLIILLISFTSIILFNAPEVCYL), 110-132 (WTLFGFWCLVCTLALIFLTYFYE), and 206-228 (WGLKCSLADHIIFVVLSILVFIA).

It belongs to the WTF family. As to quaternary structure, homomer. Interacts with other proteins that exhibit high sequence similarity.

The protein localises to the spore membrane. The protein resides in the vacuole membrane. Its function is as follows. Acts as a suppressor component of the dual wtf meiotic drive system, and can suppress but not confer meiotic drive by compatible poisons. Wtf meiotic drive systems promote unequal transmission of alleles from the parental zygote to progeny spores by encoding a poison and an antidote from the same locus; the poison is trans-acting and forms toxic aggregates in all spores within an ascus, wherease the antidote is spore-specific and targets aggregates for degradation by the vacuole. Meiotic drive by wtf systems therefore lead to poisoning of all progeny that do not inherit the dual poison/antidote allele, or express a compatible antidote. This is Meiotic drive suppressor wtf5 from Schizosaccharomyces pombe (strain 972 / ATCC 24843) (Fission yeast).